Here is a 394-residue protein sequence, read N- to C-terminus: Elongation factor Tu 1 (394 aa).

The tr-type G domain maps to 10 to 204 (KPHVNVGTIG…FLDSYIPEPE (195 aa)). The G1 stretch occupies residues 19–26 (GHVDHGKT). Residue 19–26 (GHVDHGKT) participates in GTP binding. Threonine 26 is a Mg(2+) binding site. Positions 60 to 64 (GITIN) are G2. A G3 region spans residues 81–84 (DCPG). Residues 81-85 (DCPGH) and 136-139 (NKCD) contribute to the GTP site. Residues 136–139 (NKCD) are G4. The tract at residues 174–176 (SAL) is G5.

The protein belongs to the TRAFAC class translation factor GTPase superfamily. Classic translation factor GTPase family. EF-Tu/EF-1A subfamily. Monomer.

It localises to the cytoplasm. It carries out the reaction GTP + H2O = GDP + phosphate + H(+). Its function is as follows. GTP hydrolase that promotes the GTP-dependent binding of aminoacyl-tRNA to the A-site of ribosomes during protein biosynthesis. The chain is Elongation factor Tu 1 from Shigella flexneri serotype 5b (strain 8401).